A 443-amino-acid polypeptide reads, in one-letter code: ATP-dependent protease ATPase subunit HslU (443 aa).

ATP-binding positions include Ile20, 62 to 67 (GVGKTE), Asp255, Glu321, and Arg393.

The protein belongs to the ClpX chaperone family. HslU subfamily. As to quaternary structure, a double ring-shaped homohexamer of HslV is capped on each side by a ring-shaped HslU homohexamer. The assembly of the HslU/HslV complex is dependent on binding of ATP.

The protein resides in the cytoplasm. In terms of biological role, ATPase subunit of a proteasome-like degradation complex; this subunit has chaperone activity. The binding of ATP and its subsequent hydrolysis by HslU are essential for unfolding of protein substrates subsequently hydrolyzed by HslV. HslU recognizes the N-terminal part of its protein substrates and unfolds these before they are guided to HslV for hydrolysis. The polypeptide is ATP-dependent protease ATPase subunit HslU (Helicobacter pylori (strain HPAG1)).